The chain runs to 343 residues: S-adenosylmethionine:tRNA ribosyltransferase-isomerase (343 aa).

The protein belongs to the QueA family. In terms of assembly, monomer.

It is found in the cytoplasm. It carries out the reaction 7-aminomethyl-7-carbaguanosine(34) in tRNA + S-adenosyl-L-methionine = epoxyqueuosine(34) in tRNA + adenine + L-methionine + 2 H(+). It participates in tRNA modification; tRNA-queuosine biosynthesis. Transfers and isomerizes the ribose moiety from AdoMet to the 7-aminomethyl group of 7-deazaguanine (preQ1-tRNA) to give epoxyqueuosine (oQ-tRNA). The sequence is that of S-adenosylmethionine:tRNA ribosyltransferase-isomerase from Hydrogenobaculum sp. (strain Y04AAS1).